Reading from the N-terminus, the 190-residue chain is Xanthine phosphoribosyltransferase (190 aa).

Residues Leu-20 and Asn-27 each coordinate xanthine. 128–132 serves as a coordination point for 5-phospho-alpha-D-ribose 1-diphosphate; that stretch reads ANGKA. Xanthine is bound at residue Lys-156.

It belongs to the purine/pyrimidine phosphoribosyltransferase family. Xpt subfamily. Homodimer.

It localises to the cytoplasm. The catalysed reaction is XMP + diphosphate = xanthine + 5-phospho-alpha-D-ribose 1-diphosphate. Its pathway is purine metabolism; XMP biosynthesis via salvage pathway; XMP from xanthine: step 1/1. Functionally, converts the preformed base xanthine, a product of nucleic acid breakdown, to xanthosine 5'-monophosphate (XMP), so it can be reused for RNA or DNA synthesis. The sequence is that of Xanthine phosphoribosyltransferase from Pseudomonas fluorescens (strain ATCC BAA-477 / NRRL B-23932 / Pf-5).